A 449-amino-acid polypeptide reads, in one-letter code: Tubulin beta-7 chain (449 aa).

Residues Gln11, Glu69, Ser138, Gly142, Thr143, Gly144, Asn204, and Asn226 each coordinate GTP. Glu69 is a binding site for Mg(2+). Residues 422–449 (YQQYQDATADEEGEYEEEEAEYEQEETY) form a disordered region. Residues 429–449 (TADEEGEYEEEEAEYEQEETY) are compositionally biased toward acidic residues.

This sequence belongs to the tubulin family. As to quaternary structure, dimer of alpha and beta chains. A typical microtubule is a hollow water-filled tube with an outer diameter of 25 nm and an inner diameter of 15 nM. Alpha-beta heterodimers associate head-to-tail to form protofilaments running lengthwise along the microtubule wall with the beta-tubulin subunit facing the microtubule plus end conferring a structural polarity. Microtubules usually have 13 protofilaments but different protofilament numbers can be found in some organisms and specialized cells. It depends on Mg(2+) as a cofactor.

Its subcellular location is the cytoplasm. It is found in the cytoskeleton. Functionally, tubulin is the major constituent of microtubules, a cylinder consisting of laterally associated linear protofilaments composed of alpha- and beta-tubulin heterodimers. Microtubules grow by the addition of GTP-tubulin dimers to the microtubule end, where a stabilizing cap forms. Below the cap, tubulin dimers are in GDP-bound state, owing to GTPase activity of alpha-tubulin. This Arabidopsis thaliana (Mouse-ear cress) protein is Tubulin beta-7 chain (TUBB7).